The primary structure comprises 387 residues: 3-ketoacyl-CoA thiolase (387 aa).

Cys91 acts as the Acyl-thioester intermediate in catalysis. Residues His343 and Cys373 each act as proton acceptor in the active site.

It belongs to the thiolase-like superfamily. Thiolase family. As to quaternary structure, heterotetramer of two alpha chains (FadB) and two beta chains (FadA).

It is found in the cytoplasm. The catalysed reaction is an acyl-CoA + acetyl-CoA = a 3-oxoacyl-CoA + CoA. Its pathway is lipid metabolism; fatty acid beta-oxidation. Catalyzes the final step of fatty acid oxidation in which acetyl-CoA is released and the CoA ester of a fatty acid two carbons shorter is formed. This Aeromonas salmonicida (strain A449) protein is 3-ketoacyl-CoA thiolase.